Reading from the N-terminus, the 827-residue chain is SH3-containing GRB2-like protein 3-interacting protein 1 (827 aa).

Disordered stretches follow at residues 1–115 (MMEG…ESHK), 142–205 (SIGN…GPPL), and 223–278 (IWGS…QAAT). Composition is skewed to basic and acidic residues over residues 16 to 32 (RKKE…DRDG) and 40 to 54 (PPYH…EGGK). Residues S78, S104, S105, S107, S149, S151, S156, and S169 each carry the phosphoserine modification. Phosphothreonine is present on residues T180 and T182. A Phosphoserine modification is found at S236. The segment covering 245 to 260 (TGTPPPLPPKAVPATP) has biased composition (pro residues). A phosphothreonine mark is found at T247 and T259. Phosphoserine occurs at positions 265, 287, 289, 300, 316, and 319. The segment covering 265–276 (SPLTVATGNDQA) has biased composition (polar residues). The span at 314–333 (HFSDASPEHVTPELTPREKV) shows a compositional bias: basic and acidic residues. The disordered stretch occupies residues 314–523 (HFSDASPEHV…LSAATTPTVE (210 aa)). 3 positions are modified to phosphothreonine: T324, T328, and T335. The segment covering 336–345 (PPAASDIPAD) has biased composition (low complexity). Residues 346 to 369 (SPAPGPPGPPGSAGPPGPPGPRHV) show a composition bias toward pro residues. Phosphoserine is present on S371. The segment covering 377 to 392 (EVQKKVAEQTFIKDDY) has biased composition (basic and acidic residues). Residue S398 is modified to Phosphoserine. Position 409 is a phosphothreonine (T409). Residues 436–455 (ASGASSPARPATPLVPCSST) show a composition bias toward low complexity. Positions 456–474 (TPPPPPPRPPSRPKLPPGK) are enriched in pro residues. Low complexity-rich tracts occupy residues 481 to 491 (SRPFSPPIHSS) and 498 to 521 (PLAR…TTPT). Position 485 is a phosphoserine (S485). The 269-residue stretch at 558–826 (TLPVAAAFTE…RFAAGKYLAD (269 aa)) folds into the MHD domain. 4 interaction with DPF motifs-containing proteins regions span residues 560–566 (PVAAAFT), 592–594 (SFP), 666–669 (TYYN), and 812–817 (SLIKKR). The interval 648 to 827 (MPNLMTHLKK…FAAGKYLADN (180 aa)) is necessary and sufficient to mediate interaction with CANX.

Interacts with proteins essential or regulating the formation of functional clathrin-coated pits. Interacts with CANX. Interacts with AP2A1. Interacts with EPS15. Interacts with SH3GL3. Interacts with AMPH. Interacts with ITSN1 (via SH3 domains). Interacts with and REPS1. Specifically expressed in brain (at protein level).

The protein resides in the membrane. It localises to the clathrin-coated pit. May function in clathrin-mediated endocytosis. Has both a membrane binding/tubulating activity and the ability to recruit proteins essential to the formation of functional clathrin-coated pits. Has a preference for membranes enriched in phosphatidylserine and phosphoinositides and is required for the endocytosis of the transferrin receptor. May also bind tubulin. May play a role in the regulation of energy homeostasis. The sequence is that of SH3-containing GRB2-like protein 3-interacting protein 1 (Sgip1) from Rattus norvegicus (Rat).